The chain runs to 121 residues: Small ribosomal subunit protein bS16 (121 aa).

Residues 97 to 114 show a composition bias toward basic and acidic residues; the sequence is LAKAKTKDEENDNSKVES. Residues 97-121 form a disordered region; the sequence is LAKAKTKDEENDNSKVESEGNEAES.

This sequence belongs to the bacterial ribosomal protein bS16 family.

This Prochlorococcus marinus (strain AS9601) protein is Small ribosomal subunit protein bS16.